Reading from the N-terminus, the 538-residue chain is Calcium-dependent protein kinase 32 (538 aa).

The segment at 1–37 (MGNCCGTAGSLAQNDNKPKKGRKKQNPFSIDYGLHHG) is disordered. Gly2 is lipidated: N-myristoyl glycine. The Protein kinase domain maps to 63–321 (YTLGRELGRG…AQQVLDHPWL (259 aa)). ATP contacts are provided by residues 69-77 (LGRGEFGVT) and Lys92. The Proton acceptor role is filled by Asp187. At Ser227 the chain carries Phosphoserine. The tract at residues 327–357 (APNVSLGETVRARLKQFTVMNKLKKRALRVI) is autoinhibitory domain. EF-hand domains follow at residues 364–399 (EEAS…LGHA), 400–435 (IPQD…LRKM), 436–470 (GNDE…DELG), and 471–506 (TSEE…GTDW). Residues Asp377, Ser379, Lys383, Glu388, Asp413, Asp415, Asp417, Tyr419, Glu424, Asp449, Asn451, Asn453, Tyr455, Glu460, Asp484, Asp486, Asp488, and Arg490 each contribute to the Ca(2+) site. Ser492 is modified (phosphoserine). Position 495 (Glu495) interacts with Ca(2+).

This sequence belongs to the protein kinase superfamily. Ser/Thr protein kinase family. CDPK subfamily. Interacts with ABF4. Interacts with CNGC18. Expressed in embryos and most of the vegetative tissues.

Its subcellular location is the nucleus. The protein localises to the membrane. The catalysed reaction is L-seryl-[protein] + ATP = O-phospho-L-seryl-[protein] + ADP + H(+). The enzyme catalyses L-threonyl-[protein] + ATP = O-phospho-L-threonyl-[protein] + ADP + H(+). Activated by calcium. Autophosphorylation may play an important role in the regulation of the kinase activity. May play a role in signal transduction pathways that involve calcium as a second messenger. Involved in maintaining Ca2+ homeostasis in pollen tube tips by regulating CNGC18. Functions as regulator of the calcium-mediated abscisic acid (ABA) signaling pathway. Phosphorylates ABA-responsive transcription factor ABF4 in vitro. The sequence is that of Calcium-dependent protein kinase 32 from Arabidopsis thaliana (Mouse-ear cress).